We begin with the raw amino-acid sequence, 229 residues long: Uracil-DNA glycosylase (229 aa).

The Proton acceptor role is filled by aspartate 67.

This sequence belongs to the uracil-DNA glycosylase (UDG) superfamily. UNG family.

The protein localises to the cytoplasm. The enzyme catalyses Hydrolyzes single-stranded DNA or mismatched double-stranded DNA and polynucleotides, releasing free uracil.. Its function is as follows. Excises uracil residues from the DNA which can arise as a result of misincorporation of dUMP residues by DNA polymerase or due to deamination of cytosine. The polypeptide is Uracil-DNA glycosylase (Coxiella burnetii (strain CbuG_Q212) (Coxiella burnetii (strain Q212))).